The primary structure comprises 389 residues: tRNA-specific 2-thiouridylase MnmA (389 aa).

ATP-binding positions include 35–42 (GMSGGVDS) and Met61. The segment at 121-123 (NPD) is interaction with target base in tRNA. Cys126 serves as the catalytic Nucleophile. A disulfide bridge connects residues Cys126 and Cys223. An ATP-binding site is contributed by Gly151. An interaction with tRNA region spans residues 173–175 (KDQ). The active-site Cysteine persulfide intermediate is Cys223. The interaction with tRNA stretch occupies residues 335–336 (RY).

Belongs to the MnmA/TRMU family.

It localises to the cytoplasm. It carries out the reaction S-sulfanyl-L-cysteinyl-[protein] + uridine(34) in tRNA + AH2 + ATP = 2-thiouridine(34) in tRNA + L-cysteinyl-[protein] + A + AMP + diphosphate + H(+). Functionally, catalyzes the 2-thiolation of uridine at the wobble position (U34) of tRNA, leading to the formation of s(2)U34. The sequence is that of tRNA-specific 2-thiouridylase MnmA from Actinobacillus pleuropneumoniae serotype 5b (strain L20).